Here is a 237-residue protein sequence, read N- to C-terminus: Putative HTH-type transcriptional regulator ycf28 (237 aa).

The region spanning 155 to 228 (KSITNRLISL…KKKVIIHDPI (74 aa)) is the HTH crp-type domain. Residues 188–207 (HKVLAQIIGSNRVSITRIIS) constitute a DNA-binding region (H-T-H motif).

The protein localises to the plastid. It is found in the chloroplast. The polypeptide is Putative HTH-type transcriptional regulator ycf28 (ycf28) (Porphyra purpurea (Red seaweed)).